The following is a 440-amino-acid chain: 3-phosphoshikimate 1-carboxyvinyltransferase (440 aa).

Residues K25, S26, and R30 each coordinate 3-phosphoshikimate. A phosphoenolpyruvate-binding site is contributed by K25. Residues G96 and R124 each coordinate phosphoenolpyruvate. The 3-phosphoshikimate site is built by S168, Q169, D310, and K337. Phosphoenolpyruvate is bound at residue Q169. The Proton acceptor role is filled by D310. 3 residues coordinate phosphoenolpyruvate: R341, R382, and K409.

The protein belongs to the EPSP synthase family. In terms of assembly, monomer.

The protein resides in the cytoplasm. It catalyses the reaction 3-phosphoshikimate + phosphoenolpyruvate = 5-O-(1-carboxyvinyl)-3-phosphoshikimate + phosphate. Its pathway is metabolic intermediate biosynthesis; chorismate biosynthesis; chorismate from D-erythrose 4-phosphate and phosphoenolpyruvate: step 6/7. Its function is as follows. Catalyzes the transfer of the enolpyruvyl moiety of phosphoenolpyruvate (PEP) to the 5-hydroxyl of shikimate-3-phosphate (S3P) to produce enolpyruvyl shikimate-3-phosphate and inorganic phosphate. The protein is 3-phosphoshikimate 1-carboxyvinyltransferase of Chlamydia trachomatis serovar D (strain ATCC VR-885 / DSM 19411 / UW-3/Cx).